A 233-amino-acid chain; its full sequence is Large ribosomal subunit protein uL1 (233 aa).

It belongs to the universal ribosomal protein uL1 family. As to quaternary structure, part of the 50S ribosomal subunit.

Binds directly to 23S rRNA. The L1 stalk is quite mobile in the ribosome, and is involved in E site tRNA release. In terms of biological role, protein L1 is also a translational repressor protein, it controls the translation of the L11 operon by binding to its mRNA. The sequence is that of Large ribosomal subunit protein uL1 from Psychrobacter sp. (strain PRwf-1).